The following is a 131-amino-acid chain: Fumarate reductase subunit C (131 aa).

The next 3 membrane-spanning stretches (helical) occupy residues Glu-30–Leu-50, Phe-63–His-83, and Ile-109–Leu-129.

This sequence belongs to the FrdC family. In terms of assembly, part of an enzyme complex containing four subunits: a flavoprotein (FrdA), an iron-sulfur protein (FrdB), and two hydrophobic anchor proteins (FrdC and FrdD).

It localises to the cell inner membrane. Its function is as follows. Two distinct, membrane-bound, FAD-containing enzymes are responsible for the catalysis of fumarate and succinate interconversion; fumarate reductase is used in anaerobic growth, and succinate dehydrogenase is used in aerobic growth. Anchors the catalytic components of the fumarate reductase complex to the cell inner membrane, binds quinones. In Escherichia coli O17:K52:H18 (strain UMN026 / ExPEC), this protein is Fumarate reductase subunit C.